The chain runs to 708 residues: UvrABC system protein B (708 aa).

In terms of domain architecture, Helicase ATP-binding spans Glu32–Arg419. Gly45 to Thr52 provides a ligand contact to ATP. Residues Tyr98–Ile121 carry the Beta-hairpin motif. The 163-residue stretch at Gln436 to Ile598 folds into the Helicase C-terminal domain. The UVR domain maps to Ile627 to His662. The interval Ser668–Gly708 is disordered. Residues Gly683–Gly708 show a composition bias toward basic residues.

This sequence belongs to the UvrB family. In terms of assembly, forms a heterotetramer with UvrA during the search for lesions. Interacts with UvrC in an incision complex.

The protein localises to the cytoplasm. The UvrABC repair system catalyzes the recognition and processing of DNA lesions. A damage recognition complex composed of 2 UvrA and 2 UvrB subunits scans DNA for abnormalities. Upon binding of the UvrA(2)B(2) complex to a putative damaged site, the DNA wraps around one UvrB monomer. DNA wrap is dependent on ATP binding by UvrB and probably causes local melting of the DNA helix, facilitating insertion of UvrB beta-hairpin between the DNA strands. Then UvrB probes one DNA strand for the presence of a lesion. If a lesion is found the UvrA subunits dissociate and the UvrB-DNA preincision complex is formed. This complex is subsequently bound by UvrC and the second UvrB is released. If no lesion is found, the DNA wraps around the other UvrB subunit that will check the other stand for damage. This is UvrABC system protein B from Rhodopirellula baltica (strain DSM 10527 / NCIMB 13988 / SH1).